A 382-amino-acid polypeptide reads, in one-letter code: Lipid-A-disaccharide synthase (382 aa).

Belongs to the LpxB family.

It carries out the reaction a lipid X + a UDP-2-N,3-O-bis[(3R)-3-hydroxyacyl]-alpha-D-glucosamine = a lipid A disaccharide + UDP + H(+). The protein operates within bacterial outer membrane biogenesis; LPS lipid A biosynthesis. In terms of biological role, condensation of UDP-2,3-diacylglucosamine and 2,3-diacylglucosamine-1-phosphate to form lipid A disaccharide, a precursor of lipid A, a phosphorylated glycolipid that anchors the lipopolysaccharide to the outer membrane of the cell. The polypeptide is Lipid-A-disaccharide synthase (Alteromonas mediterranea (strain DSM 17117 / CIP 110805 / LMG 28347 / Deep ecotype)).